The chain runs to 92 residues: Small ribosomal subunit protein uS19 (92 aa).

Belongs to the universal ribosomal protein uS19 family.

Protein S19 forms a complex with S13 that binds strongly to the 16S ribosomal RNA. In Cereibacter sphaeroides (strain ATCC 17029 / ATH 2.4.9) (Rhodobacter sphaeroides), this protein is Small ribosomal subunit protein uS19.